Consider the following 294-residue polypeptide: tRNA dimethylallyltransferase (294 aa).

11 to 18 (GPTAVGKT) lines the ATP pocket. 13-18 (TAVGKT) provides a ligand contact to substrate. Residues 36 to 39 (DSQQ) form an interaction with substrate tRNA region.

This sequence belongs to the IPP transferase family. As to quaternary structure, monomer. It depends on Mg(2+) as a cofactor.

The catalysed reaction is adenosine(37) in tRNA + dimethylallyl diphosphate = N(6)-dimethylallyladenosine(37) in tRNA + diphosphate. Its function is as follows. Catalyzes the transfer of a dimethylallyl group onto the adenine at position 37 in tRNAs that read codons beginning with uridine, leading to the formation of N6-(dimethylallyl)adenosine (i(6)A). This chain is tRNA dimethylallyltransferase, found in Lactococcus lactis subsp. cremoris (strain MG1363).